A 246-amino-acid chain; its full sequence is Small ribosomal subunit protein uS3 (246 aa).

The KH type-2 domain occupies 23 to 94 (LNEFLTRELA…RIELYAEKVA (72 aa)). The interval 201-246 (GPKKPLPDNVSVVEPKEEKIYETPETEYKIPPPSKPLDDLSEAKVL) is disordered. Composition is skewed to basic and acidic residues over residues 214-228 (EPKEEKIYETPETEY) and 236-246 (PLDDLSEAKVL). Residues T223 and T226 each carry the phosphothreonine modification. The residue at position 241 (S241) is a Phosphoserine.

The protein belongs to the universal ribosomal protein uS3 family. In terms of assembly, interacts with LTV1; the interaction is RNA-independent.

The protein resides in the cytoplasm. The protein localises to the nucleus. Functionally, has DNA repair activity directed towards the mutagenic lesions 8-oxoguanine and abasic sites in DNA. It can cleave DNA containing 8-oxoguanine residues efficiently. Also acts as an ap lyase, cleaving phosphodiester bonds via a beta,delta elimination reaction. In Drosophila melanogaster (Fruit fly), this protein is Small ribosomal subunit protein uS3 (RpS3).